The chain runs to 108 residues: Insulin (108 aa).

Positions 1-21 (MAVWIQAGALLFLLAVSSVNA) are cleaved as a signal peptide. 3 disulfides stabilise this stretch: Cys30–Cys94, Cys42–Cys107, and Cys93–Cys98. A propeptide spans 54-85 (DVDPPLGFLPPKSAQETEVADFAFKDHAEVIR) (c peptide).

Belongs to the insulin family. Heterodimer of a B chain and an A chain linked by two disulfide bonds.

It is found in the secreted. Functionally, insulin decreases blood glucose concentration. It increases cell permeability to monosaccharides, amino acids and fatty acids. It accelerates glycolysis, the pentose phosphate cycle, and glycogen synthesis in liver. The chain is Insulin (ins) from Cyprinus carpio (Common carp).